A 919-amino-acid polypeptide reads, in one-letter code: Glutamate receptor ionotropic, kainate 3 (919 aa).

A signal peptide spans 1-31 (MTAPWRRLRSLVWEYWAGLLVCAFWIPDSRG). Over 32–563 (MPHVIRIGGI…VFSFLNPLSP (532 aa)) the chain is Extracellular. Asn-70, Asn-76, Asn-278, Asn-381, Asn-415, Asn-426, and Asn-433 each carry an N-linked (GlcNAc...) asparagine glycan. A disulfide bridge connects residues Cys-99 and Cys-350. Residues Pro-518, Thr-520, and Arg-525 each contribute to the L-glutamate site. 2 N-linked (GlcNAc...) asparagine glycosylation sites follow: Asn-548 and Asn-551. The helical transmembrane segment at 564–584 (DIWMYVLLAYLGVSCVLFVIA) threads the bilayer. The Cytoplasmic segment spans residues 585-636 (RFSPYEWYDAHPCNPGSEVVENNFTLLNSFWFGMGSLMQQGSELMPKALSTR). The chain crosses the membrane as a helical span at residues 637–657 (IIGGIWWFFTLIIISSYTANL). Topologically, residues 658–820 (AAFLTVERME…KEASALGIQK (163 aa)) are extracellular. Residues Ala-691, Thr-692, and Glu-739 each contribute to the L-glutamate site. Residue Asn-752 is glycosylated (N-linked (GlcNAc...) asparagine). Residues 821 to 841 (IGGIFIVLAAGLVLSVLVAVG) form a helical membrane-spanning segment. The Cytoplasmic portion of the chain corresponds to 842–919 (EFVYKLRKTA…CSTSLAPVFP (78 aa)). At Ser-869 the chain carries Phosphoserine. Residue Lys-887 forms a Glycyl lysine isopeptide (Lys-Gly) (interchain with G-Cter in SUMO1) linkage.

It belongs to the glutamate-gated ion channel (TC 1.A.10.1) family. GRIK3 subfamily. In terms of assembly, homotetramer, and heterotetramer with either GRIK4 or GRIK5. Can form functional heteromeric receptors with GRIK2. Interacts with PRKCABP. Interacts with NETO2.

The protein resides in the cell membrane. Its subcellular location is the postsynaptic cell membrane. The catalysed reaction is Ca(2+)(in) = Ca(2+)(out). Its function is as follows. Ionotropic glutamate receptor that functions as a cation-permeable ligand-gated ion channel, gated by L-glutamate and the glutamatergic agonist kainic acid. Binding of the excitatory neurotransmitter L-glutamate induces a conformation change, leading to the opening of the cation channel, and thereby converts the chemical signal to an electrical impulse. The receptor then desensitizes rapidly and enters a transient inactive state, characterized by the presence of bound agonist. In association with GRIK2, involved in presynaptic facilitation of glutamate release at hippocampal mossy fiber synapses. In Homo sapiens (Human), this protein is Glutamate receptor ionotropic, kainate 3 (GRIK3).